The sequence spans 484 residues: tRNA sulfurtransferase (484 aa).

Positions 63-167 constitute a THUMP domain; that stretch reads ANLILLLSST…NEKLFFIDKK (105 aa). Residues 185-186, lysine 267, glycine 289, and glutamine 298 contribute to the ATP site; that span reads LI. Cysteine 346 and cysteine 458 are disulfide-bonded. The Rhodanese domain maps to 406 to 484; the sequence is FAENEIVLDI…GFDNVKVYRP (79 aa). The Cysteine persulfide intermediate role is filled by cysteine 458.

This sequence belongs to the ThiI family.

The protein localises to the cytoplasm. It catalyses the reaction [ThiI sulfur-carrier protein]-S-sulfanyl-L-cysteine + a uridine in tRNA + 2 reduced [2Fe-2S]-[ferredoxin] + ATP + H(+) = [ThiI sulfur-carrier protein]-L-cysteine + a 4-thiouridine in tRNA + 2 oxidized [2Fe-2S]-[ferredoxin] + AMP + diphosphate. The enzyme catalyses [ThiS sulfur-carrier protein]-C-terminal Gly-Gly-AMP + S-sulfanyl-L-cysteinyl-[cysteine desulfurase] + AH2 = [ThiS sulfur-carrier protein]-C-terminal-Gly-aminoethanethioate + L-cysteinyl-[cysteine desulfurase] + A + AMP + 2 H(+). The protein operates within cofactor biosynthesis; thiamine diphosphate biosynthesis. Catalyzes the ATP-dependent transfer of a sulfur to tRNA to produce 4-thiouridine in position 8 of tRNAs, which functions as a near-UV photosensor. Also catalyzes the transfer of sulfur to the sulfur carrier protein ThiS, forming ThiS-thiocarboxylate. This is a step in the synthesis of thiazole, in the thiamine biosynthesis pathway. The sulfur is donated as persulfide by IscS. The sequence is that of tRNA sulfurtransferase from Psychromonas ingrahamii (strain DSM 17664 / CCUG 51855 / 37).